A 317-amino-acid polypeptide reads, in one-letter code: DNA repair nuclease/redox regulator APEX1 (317 aa).

The tract at residues 1-32 (MPKRGKRAAAEDGEEPKSEPETKKSKGAAKKT) is necessary for interaction with YBX1, binding to RNA, association together with NPM1 to rRNA, endoribonuclease activity on abasic RNA and localization in the nucleoli. The tract at residues 1 to 57 (MPKRGKRAAAEDGEEPKSEPETKKSKGAAKKTEKEAAGEGPVLYEDPPDQKTSASGK) is disordered. K6 carries the N6-acetyllysine; by EP300 modification. The Nuclear localization signal (NLS) signature appears at 8–12 (AAAED). Over residues 15 to 37 (EPKSEPETKKSKGAAKKTEKEAA) the composition is skewed to basic and acidic residues. S18 carries the post-translational modification Phosphoserine. Residues 22–32 (TKKSKGAAKKT) form a necessary for interaction with NPM1 and for efficient rRNA binding region. N6-acetyllysine occurs at positions 26, 30, 31, and 34. Phosphoserine is present on S53. The Nuclear export signal (NES) signature appears at 63–79 (ICSWNVDGLRAWIKKKG). C64 carries the post-translational modification S-nitrosocysteine; alternate. An intrachain disulfide couples C64 to C92. Residue D69 participates in Mg(2+) binding. An S-nitrosocysteine; alternate modification is found at C92. Residue E95 participates in Mg(2+) binding. Y170 is an active-site residue. At K196 the chain carries N6-acetyllysine. D209 and N211 together coordinate Mg(2+). D209 (proton donor/acceptor) is an active-site residue. Position 232 is a phosphothreonine; by CDK5 (T232). The mitochondrial targeting sequence (MTS) stretch occupies residues 288 to 317 (HSLLPALCDSKIRSKALGSDHCPITLYLAL). A Mg(2+)-binding site is contributed by D307. Residue C309 is modified to S-nitrosocysteine.

This sequence belongs to the DNA repair enzymes AP/ExoA family. In terms of assembly, monomer. Homodimer; disulfide-linked. Component of the SET complex, composed of at least APEX1, SET, ANP32A, HMGB2, NME1 and TREX1. Associates with the dimer XRCC5/XRCC6 in a DNA-dependent manner. Interacts with SIRT1; the interaction is increased in the context of genotoxic stress. Interacts with HDAC1, HDAC2 and HDAC3; the interactions are not dependent on the APEX1 acetylation status. Interacts with XRCC1; the interaction is induced by SIRT1 and increased with the APEX1 acetylated form. Interacts with NPM1 (via N-terminal domain); the interaction is RNA-dependent and decreases in hydrogen peroxide-damaged cells. Interacts (via N-terminus) with YBX1 (via C-terminus); the interaction is increased in presence of APEX1 acetylated. Interacts with HNRNPL; the interaction is DNA-dependent. Interacts (via N-terminus) with KPNA1 and KPNA2. Interacts with TXN; the interaction stimulates the FOS/JUN AP-1 complex DNA-binding activity in a redox-dependent manner. Interacts with GZMA, KRT8, MDM2, POLB, PRDX6, PRPF19, RPLP0, TOMM20 and WDR77. Binds to CDK5. Mg(2+) is required as a cofactor. The cofactor is Mn(2+). Post-translationally, phosphorylated. Phosphorylation by kinase PKC or casein kinase CK2 results in enhanced redox activity that stimulates binding of the FOS/JUN AP-1 complex to its cognate binding site. AP-endodeoxyribonuclease activity is not affected by CK2-mediated phosphorylation. Phosphorylation of Thr-232 by CDK5 in response to MPP(+)/MPTP (1-methyl-4-phenylpyridinium) reduces AP-endodeoxyribonuclease activity resulting in accumulation of DNA damage and contributing to neuronal death. In terms of processing, acetylated on Lys-6. Acetylation is increased by the transcriptional coactivator EP300 acetyltransferase, genotoxic agents like H(2)O(2) and methyl methanesulfonate (MMS). Acetylation increases its binding affinity to the negative calcium response element (nCaRE) DNA promoter. The acetylated form induces a stronger binding of YBX1 to the Y-box sequence in the MDR1 promoter than the unacetylated form. Deacetylated on lysines. Lys-6 is deacetylated by SIRT1. Cleaved at Lys-30 by granzyme A to create the mitochondrial form; leading in reduction of binding to DNA, AP endodeoxyribonuclease activity, redox activation of transcription factors and to enhanced cell death. Cleaved by granzyme K; leading to intracellular ROS accumulation and enhanced cell death after oxidative stress. Post-translationally, cys-64 and Cys-92 are nitrosylated in response to nitric oxide (NO) and lead to the exposure of the nuclear export signal (NES). In terms of processing, ubiquitinated by MDM2; leading to translocation to the cytoplasm and proteasomal degradation.

It is found in the nucleus. Its subcellular location is the nucleolus. The protein localises to the nucleus speckle. The protein resides in the endoplasmic reticulum. It localises to the cytoplasm. It is found in the mitochondrion. It catalyses the reaction a deoxyribonucleotide-2'-deoxyribose-5'-monophosphate-DNA + H2O = a 5'-end 2'-deoxyribose-5'-monophosphate-DNA + a 3'-end 2'-deoxyribonucleotide-DNA + H(+). The catalysed reaction is Exonucleolytic cleavage in the 3'- to 5'-direction to yield nucleoside 5'-phosphates.. It carries out the reaction a 3'-end 2'-deoxyribonucleotide-3'-phosphoglycolate-DNA + H2O = 2-phosphoglycolate + a 3'-end 2'-deoxyribonucleotide-DNA + H(+). The enzyme catalyses a 3'-end 2'-deoxyribonucleotide-8-oxoguanine-DNA + H2O = 8-oxo-dGMP + a 3'-end 2'-deoxyribonucleotide-DNA + H(+). NPM1 stimulates endodeoxyribonuclease activity on double-stranded DNA with AP sites, but inhibits endoribonuclease activity on single-stranded RNA containing AP sites. Functionally, multifunctional protein that plays a central role in the cellular response to oxidative stress. The two major activities of APEX1 are DNA repair and redox regulation of transcriptional factors. Functions as an apurinic/apyrimidinic (AP) endodeoxyribonuclease in the base excision repair (BER) pathway of DNA lesions induced by oxidative and alkylating agents. Initiates repair of AP sites in DNA by catalyzing hydrolytic incision of the phosphodiester backbone immediately adjacent to the damage, generating a single-strand break with 5'-deoxyribose phosphate and 3'-hydroxyl ends. Also incises at AP sites in the DNA strand of DNA/RNA hybrids, single-stranded DNA regions of R-loop structures, and single-stranded RNA molecules. Operates at switch sites of immunoglobulin (Ig) constant regions where it mediates Ig isotype class switch recombination. Processes AP sites induced by successive action of AICDA and UNG. Generates staggered nicks in opposite DNA strands resulting in the formation of double-strand DNA breaks that are finally resolved via non-homologous end joining repair pathway. Has 3'-5' exodeoxyribonuclease activity on mismatched deoxyribonucleotides at the 3' termini of nicked or gapped DNA molecules during short-patch BER. Possesses DNA 3' phosphodiesterase activity capable of removing lesions (such as phosphoglycolate and 8-oxoguanine) blocking the 3' side of DNA strand breaks. Also acts as an endoribonuclease involved in the control of single-stranded RNA metabolism. Plays a role in regulating MYC mRNA turnover by preferentially cleaving in between UA and CA dinucleotides of the MYC coding region determinant (CRD). In association with NMD1, plays a role in the rRNA quality control process during cell cycle progression. Acts as a loading factor for POLB onto non-incised AP sites in DNA and stimulates the 5'-terminal deoxyribose 5'-phosphate (dRp) excision activity of POLB. Exerts reversible nuclear redox activity to regulate DNA binding affinity and transcriptional activity of transcriptional factors by controlling the redox status of their DNA-binding domain, such as the FOS/JUN AP-1 complex after exposure to IR. Involved in calcium-dependent down-regulation of parathyroid hormone (PTH) expression by binding to negative calcium response elements (nCaREs). Together with HNRNPL or the dimer XRCC5/XRCC6, associates with nCaRE, acting as an activator of transcriptional repression. May also play a role in the epigenetic regulation of gene expression by participating in DNA demethylation. Stimulates the YBX1-mediated MDR1 promoter activity, when acetylated at Lys-6 and Lys-7, leading to drug resistance. Plays a role in protection from granzyme-mediated cellular repair leading to cell death. Binds DNA and RNA. Associates, together with YBX1, on the MDR1 promoter. Together with NPM1, associates with rRNA. In Rattus norvegicus (Rat), this protein is DNA repair nuclease/redox regulator APEX1 (Apex1).